We begin with the raw amino-acid sequence, 386 residues long: Patatin-14 (386 aa).

The first 23 residues, Met-1–Ala-23, serve as a signal peptide directing secretion. The region spanning Leu-32–Leu-229 is the PNPLA domain. The GXGXXG signature appears at Gly-36–Gly-41. Positions Gly-75–Gly-79 match the GXSXG motif. Residue Ser-77 is the Nucleophile of the active site. Residue Asn-115 is glycosylated (N-linked (GlcNAc...) asparagine). The Proton acceptor role is filled by Asp-215. The DGA/G signature appears at Asp-215–Gly-217. Residues Glu-321–Ala-381 adopt a coiled-coil conformation.

The protein belongs to the patatin family. As to expression, tuber.

It is found in the vacuole. Probable lipolytic acyl hydrolase (LAH), an activity which is thought to be involved in the response of tubers to pathogens. This chain is Patatin-14, found in Solanum tuberosum (Potato).